The following is a 1960-amino-acid chain: Transcription factor 20 (1960 aa).

Residues 1 to 18 (MQSFREQSSYHGNQQSYP) show a composition bias toward polar residues. The tract at residues 1-287 (MQSFREQSSY…GSNAQAYGTQ (287 aa)) is disordered. The span at 42–60 (GGTGGSSGSSGSGSGGGRR) shows a compositional bias: gly residues. R60 carries the post-translational modification Omega-N-methylarginine. A compositionally biased stretch (low complexity) spans 61–75 (GAAAAAAAMASETSG). The segment covering 122-131 (QGSSFGNQYG) has biased composition (polar residues). Positions 164–192 (SAQYQQQASSQQQQQQVQQLRQQLYQSHQ) are enriched in low complexity. Polar residues predominate over residues 193 to 219 (PLPQATGQPASSSSHLQPMQRPSTLPS). The segment covering 236–259 (QSSASSSSSSSFPSPQRFSQSGQS) has biased composition (low complexity). 2 stretches are compositionally biased toward polar residues: residues 260-270 (YDGSYNVNAGS) and 277-287 (VGSNAQAYGTQ). K304 is covalently cross-linked (Glycyl lysine isopeptide (Lys-Gly) (interchain with G-Cter in SUMO2)). Disordered stretches follow at residues 305–328 (IPQG…SQHV) and 360–392 (FHQN…LMQT). Composition is skewed to low complexity over residues 306–322 (PQGT…QQQQ) and 368–388 (SNPS…TPSP). Phosphoserine is present on residues S419 and S430. Positions 476 to 748 (SDALTPQKKT…HGERKGRNEK (273 aa)) are disordered. Polar residues-rich tracts occupy residues 497–508 (SCTNSEGSSQPE) and 537–547 (LSGQSTSSDTT). Phosphoserine is present on residues S538, S559, S574, and S583. K602 is modified (N6-acetyllysine). Positions 616–628 (RVEKPGGQDKGSQ) are enriched in basic and acidic residues. Phosphoserine is present on S640. The segment covering 665–677 (GNKNGDNNSNHNG) has biased composition (low complexity). Residues 693 to 702 (TSRTEPSKSP) show a composition bias toward polar residues. Residues K710, K733, K748, K823, K832, and K844 each participate in a glycyl lysine isopeptide (Lys-Gly) (interchain with G-Cter in SUMO2) cross-link. The segment covering 732-748 (EKGDFTGHGERKGRNEK) has biased composition (basic and acidic residues). A Phosphoserine modification is found at S871. Glycyl lysine isopeptide (Lys-Gly) (interchain with G-Cter in SUMO2) cross-links involve residues K920 and K922. A disordered region spans residues 920-1037 (KLKSQSGQIK…GDPHHMNPHM (118 aa)). K929 is covalently cross-linked (Glycyl lysine isopeptide (Lys-Gly) (interchain with G-Cter in SUMO1); alternate). Residue K929 forms a Glycyl lysine isopeptide (Lys-Gly) (interchain with G-Cter in SUMO2); alternate linkage. The segment covering 936 to 945 (SKSQASFNNK) has biased composition (polar residues). Basic and acidic residues predominate over residues 946-961 (KSGDHCHPPSIKHESY). A Glycyl lysine isopeptide (Lys-Gly) (interchain with G-Cter in SUMO2) cross-link involves residue K957. 2 positions are modified to phosphoserine: S966 and S1005. K1015 is covalently cross-linked (Glycyl lysine isopeptide (Lys-Gly) (interchain with G-Cter in SUMO2)). At R1024 the chain carries Omega-N-methylarginine. S1053 carries the post-translational modification Phosphoserine. Glycyl lysine isopeptide (Lys-Gly) (interchain with G-Cter in SUMO2) cross-links involve residues K1086, K1098, K1137, K1173, K1178, K1183, K1210, K1231, K1267, and K1274. Disordered stretches follow at residues 1110–1142 (AAAQ…DKDG), 1162–1285 (RCLM…GRLL), and 1303–1331 (SHSQ…CPAV). Residues 1130–1142 (DRVRSPLKNDKDG) show a composition bias toward basic and acidic residues. Residues 1170–1191 (LPNKGMELKHGSQKLQESCWDL) form a leucine-zipper region. The short motif at 1254–1268 (RRRVRSFISPIPSKR) is the Nuclear localization signal element. A compositionally biased stretch (basic and acidic residues) spans 1304-1318 (HSQDIKSIPKRDSSK). A Phosphoserine modification is found at S1305. K1309 is covalently cross-linked (Glycyl lysine isopeptide (Lys-Gly) (interchain with G-Cter in SUMO2)). S1335 carries the post-translational modification Phosphoserine. Residue K1338 forms a Glycyl lysine isopeptide (Lys-Gly) (interchain with G-Cter in SUMO2) linkage. S1361 bears the Phosphoserine mark. A disordered region spans residues 1384-1607 (DILSLKSGPP…TKQAVPIVEP (224 aa)). Glycyl lysine isopeptide (Lys-Gly) (interchain with G-Cter in SUMO2) cross-links involve residues K1389, K1409, K1428, and K1446. A compositionally biased stretch (basic and acidic residues) spans 1424–1451 (LHVEKPLPRSSEEWRGSVDDKVKTETHA). The span at 1464–1477 (MTSTTSQKPGSNQG) shows a compositional bias: polar residues. Residue K1510 forms a Glycyl lysine isopeptide (Lys-Gly) (interchain with G-Cter in SUMO2) linkage. S1522 carries the post-translational modification Phosphoserine. K1524 participates in a covalent cross-link: Glycyl lysine isopeptide (Lys-Gly) (interchain with G-Cter in SUMO2). A DNA-binding region (a.T hook) is located at residues 1537–1551 (GKKKGRPIGSVNKQK). Residues 1555-1566 (QPPPPPPQPPQI) show a composition bias toward pro residues. The short motif at 1576-1600 (KPKKQRQRRERRKPGAQPRKRKTKQ) is the Nuclear localization signal element. Basic residues predominate over residues 1578 to 1599 (KKQRQRRERRKPGAQPRKRKTK). K1613 participates in a covalent cross-link: Glycyl lysine isopeptide (Lys-Gly) (interchain with G-Cter in SUMO2). Disordered stretches follow at residues 1660 to 1683 (LVRG…KALP) and 1732 to 1839 (TLPK…PELE). A Phosphoserine modification is found at S1669. 3 positions are modified to phosphothreonine: T1671, T1762, and T1764. The Nuclear localization signal signature appears at 1785-1792 (RFKRRHRS). Residues 1829–1865 (PTTSEGGPELELQIPELPLDSNEFWVHEGCILWANGI) form a C2HC pre-PHD-type; degenerate zinc finger. A PHD-type zinc finger spans residues 1885–1933 (MKCSHCQEAGATLGCYNKGCSFRYHYPCAIDADCLLHEENFSVRCPKHK). Residues 1939–1960 (PLPPLQNKTAKGSLSTEQSERG) form a disordered region. Residues 1944-1960 (QNKTAKGSLSTEQSERG) show a composition bias toward polar residues.

In terms of assembly, homodimer. Interacts with RNF4 and JUN. In terms of tissue distribution, expressed in most tissues, except in ovary and prostate. Isoform 1 is exclusively expressed in brain, heart and testis, and this form predominates in liver and kidney. Isoform 2 predominates in lung.

It localises to the nucleus. Functionally, transcriptional activator that binds to the regulatory region of MMP3 and thereby controls stromelysin expression. It stimulates the activity of various transcriptional activators such as JUN, SP1, PAX6 and ETS1, suggesting a function as a coactivator. This is Transcription factor 20 (TCF20) from Homo sapiens (Human).